Here is a 434-residue protein sequence, read N- to C-terminus: Serine/threonine-protein kinase Sgk1-B (434 aa).

Residues 68-94 form a disordered region; the sequence is ESELLNENSSPPPSHSQQINLGPSSNP. Positions 101–358 constitute a Protein kinase domain; sequence FQFLKIIGKG…FMEIKNHIFF (258 aa). ATP-binding positions include 107-115 and Lys130; that span reads IGKGSFGKV. Asp225 acts as the Proton acceptor in catalysis. Residues 359-434 form the AGC-kinase C-terminal domain; that stretch reads SPIDWDDLIN…SYAPPMDSYL (76 aa).

The protein belongs to the protein kinase superfamily. AGC Ser/Thr protein kinase family.

Its subcellular location is the cytoplasm. It localises to the nucleus. It is found in the endoplasmic reticulum. The catalysed reaction is L-seryl-[protein] + ATP = O-phospho-L-seryl-[protein] + ADP + H(+). It carries out the reaction L-threonyl-[protein] + ATP = O-phospho-L-threonyl-[protein] + ADP + H(+). Its function is as follows. Protein kinase that may play an important role in cellular stress response. Plays an important role in activating certain potassium, sodium, and chloride channels, suggesting an involvement in the regulation of processes such as cell survival, neuronal excitability and renal sodium excretion. In Xenopus laevis (African clawed frog), this protein is Serine/threonine-protein kinase Sgk1-B (sgk1-b).